The primary structure comprises 382 residues: Chaperone protein DnaJ (382 aa).

The J domain occupies 5-70; that stretch reads DYYDLLGLSK…DKRAAYDRYG (66 aa). A CR-type zinc finger spans residues 138–216; sequence GTKVPINYVT…CSGSGRVRDE (79 aa). Residues cysteine 151, cysteine 154, cysteine 168, cysteine 171, cysteine 190, cysteine 193, cysteine 204, and cysteine 207 each contribute to the Zn(2+) site. 4 CXXCXGXG motif repeats span residues 151-158, 168-175, 190-197, and 204-211; these read CSSCSGSG, CNTCHGAG, CHVCNGEG, and CKKCSGSG.

It belongs to the DnaJ family. In terms of assembly, homodimer. The cofactor is Zn(2+).

The protein localises to the cytoplasm. In terms of biological role, participates actively in the response to hyperosmotic and heat shock by preventing the aggregation of stress-denatured proteins and by disaggregating proteins, also in an autonomous, DnaK-independent fashion. Unfolded proteins bind initially to DnaJ; upon interaction with the DnaJ-bound protein, DnaK hydrolyzes its bound ATP, resulting in the formation of a stable complex. GrpE releases ADP from DnaK; ATP binding to DnaK triggers the release of the substrate protein, thus completing the reaction cycle. Several rounds of ATP-dependent interactions between DnaJ, DnaK and GrpE are required for fully efficient folding. Also involved, together with DnaK and GrpE, in the DNA replication of plasmids through activation of initiation proteins. The polypeptide is Chaperone protein DnaJ (Ehrlichia ruminantium (strain Gardel)).